Reading from the N-terminus, the 437-residue chain is GTPase Obg (437 aa).

In terms of domain architecture, Obg spans 2 to 160; that stretch reads SMFLDTAKIS…RQLELELKIL (159 aa). Residues 161 to 338 enclose the OBG-type G domain; sequence ADVGLVGFPS…LLEATAELLA (178 aa). GTP-binding positions include 167-174, 192-196, 214-217, 284-287, and 319-321; these read GFPSVGKS, FTTIV, DLPG, NKMD, and SSL. Residues S174 and T194 each contribute to the Mg(2+) site. The OCT domain occupies 359 to 437; it reads GFAKTEKDFE…IGKFEFEFVD (79 aa).

This sequence belongs to the TRAFAC class OBG-HflX-like GTPase superfamily. OBG GTPase family. Monomer. The cofactor is Mg(2+).

Its subcellular location is the cytoplasm. Its function is as follows. An essential GTPase which binds GTP, GDP and possibly (p)ppGpp with moderate affinity, with high nucleotide exchange rates and a fairly low GTP hydrolysis rate. Plays a role in control of the cell cycle, stress response, ribosome biogenesis and in those bacteria that undergo differentiation, in morphogenesis control. This Streptococcus pyogenes serotype M2 (strain MGAS10270) protein is GTPase Obg.